The following is a 180-amino-acid chain: Acireductone dioxygenase (180 aa).

Fe(2+) contacts are provided by His88, His90, Glu94, and His133. Positions 88, 90, 94, and 133 each coordinate Ni(2+).

Belongs to the acireductone dioxygenase (ARD) family. Monomer. Interacts with MMP14. Requires Fe(2+) as cofactor. Ni(2+) serves as cofactor.

The protein resides in the cytoplasm. Its subcellular location is the nucleus. The protein localises to the cell membrane. The catalysed reaction is 1,2-dihydroxy-5-(methylsulfanyl)pent-1-en-3-one + O2 = 4-methylsulfanyl-2-oxobutanoate + formate + 2 H(+). It carries out the reaction 1,2-dihydroxy-5-(methylsulfanyl)pent-1-en-3-one + O2 = 3-(methylsulfanyl)propanoate + CO + formate + 2 H(+). Its pathway is amino-acid biosynthesis; L-methionine biosynthesis via salvage pathway; L-methionine from S-methyl-5-thio-alpha-D-ribose 1-phosphate: step 5/6. Functionally, catalyzes 2 different reactions between oxygen and the acireductone 1,2-dihydroxy-3-keto-5-methylthiopentene (DHK-MTPene) depending upon the metal bound in the active site. Fe-containing acireductone dioxygenase (Fe-ARD) produces formate and 2-keto-4-methylthiobutyrate (KMTB), the alpha-ketoacid precursor of methionine in the methionine recycle pathway. Ni-containing acireductone dioxygenase (Ni-ARD) produces methylthiopropionate, carbon monoxide and formate, and does not lie on the methionine recycle pathway. The polypeptide is Acireductone dioxygenase (Gallus gallus (Chicken)).